Reading from the N-terminus, the 362-residue chain is tRNA-specific 2-thiouridylase MnmA (362 aa).

ATP-binding positions include 13-20 and Met-39; that span reads GLSGGVDS. Residues 99-101 form an interaction with target base in tRNA region; that stretch reads NPD. Cys-104 (nucleophile) is an active-site residue. A disulfide bridge connects residues Cys-104 and Cys-200. Position 128 (Gly-128) interacts with ATP. Positions 150–152 are interaction with tRNA; it reads KDQ. Residue Cys-200 is the Cysteine persulfide intermediate of the active site.

Belongs to the MnmA/TRMU family.

The protein localises to the cytoplasm. It carries out the reaction S-sulfanyl-L-cysteinyl-[protein] + uridine(34) in tRNA + AH2 + ATP = 2-thiouridine(34) in tRNA + L-cysteinyl-[protein] + A + AMP + diphosphate + H(+). In terms of biological role, catalyzes the 2-thiolation of uridine at the wobble position (U34) of tRNA, leading to the formation of s(2)U34. The chain is tRNA-specific 2-thiouridylase MnmA from Coxiella burnetii (strain Dugway 5J108-111).